A 233-amino-acid chain; its full sequence is Large ribosomal subunit protein uL1 (233 aa).

The protein belongs to the universal ribosomal protein uL1 family. Part of the 50S ribosomal subunit.

Functionally, binds directly to 23S rRNA. The L1 stalk is quite mobile in the ribosome, and is involved in E site tRNA release. Protein L1 is also a translational repressor protein, it controls the translation of the L11 operon by binding to its mRNA. The protein is Large ribosomal subunit protein uL1 of Finegoldia magna (strain ATCC 29328 / DSM 20472 / WAL 2508) (Peptostreptococcus magnus).